Reading from the N-terminus, the 428-residue chain is Aspartate--tRNA(Asp) ligase (428 aa).

Glu-166 is an L-aspartate binding site. The tract at residues 188–191 (QLYK) is aspartate. Arg-210 is a binding site for L-aspartate. Residues 210-212 (RAE), 218-220 (RHL), and Glu-351 each bind ATP. The Mg(2+) site is built by Glu-351 and Ser-354. Residues Ser-354 and Arg-358 each coordinate L-aspartate. ATP is bound at residue 399–402 (GLER).

This sequence belongs to the class-II aminoacyl-tRNA synthetase family. Type 2 subfamily. In terms of assembly, homodimer. Requires Mg(2+) as cofactor.

Its subcellular location is the cytoplasm. The enzyme catalyses tRNA(Asp) + L-aspartate + ATP = L-aspartyl-tRNA(Asp) + AMP + diphosphate. Functionally, catalyzes the attachment of L-aspartate to tRNA(Asp) in a two-step reaction: L-aspartate is first activated by ATP to form Asp-AMP and then transferred to the acceptor end of tRNA(Asp). This Thermoplasma volcanium (strain ATCC 51530 / DSM 4299 / JCM 9571 / NBRC 15438 / GSS1) protein is Aspartate--tRNA(Asp) ligase.